The primary structure comprises 334 residues: DNA-directed RNA polymerase subunit alpha (334 aa).

Positions 1–231 are alpha N-terminal domain (alpha-NTD); sequence MQSNTFLTPR…EQLSVFADLK (231 aa). The segment at 245–334 is alpha C-terminal domain (alpha-CTD); that stretch reads IDPVLLRPVD…GKKDTSHAAP (90 aa).

This sequence belongs to the RNA polymerase alpha chain family. Homodimer. The RNAP catalytic core consists of 2 alpha, 1 beta, 1 beta' and 1 omega subunit. When a sigma factor is associated with the core the holoenzyme is formed, which can initiate transcription.

It carries out the reaction RNA(n) + a ribonucleoside 5'-triphosphate = RNA(n+1) + diphosphate. DNA-dependent RNA polymerase catalyzes the transcription of DNA into RNA using the four ribonucleoside triphosphates as substrates. This is DNA-directed RNA polymerase subunit alpha from Nitrosospira multiformis (strain ATCC 25196 / NCIMB 11849 / C 71).